The sequence spans 490 residues: Ribulose bisphosphate carboxylase large chain (490 aa).

2 residues coordinate substrate: asparagine 127 and threonine 177. The Proton acceptor role is filled by lysine 179. Lysine 181 contributes to the substrate binding site. 3 residues coordinate Mg(2+): lysine 205, aspartate 207, and glutamate 208. Position 205 is an N6-carboxylysine (lysine 205). Histidine 297 serves as the catalytic Proton acceptor. Substrate contacts are provided by arginine 298, histidine 330, and serine 382.

The protein belongs to the RuBisCO large chain family. Type I subfamily. In terms of assembly, heterohexadecamer of 8 large chains and 8 small chains. The cofactor is Mg(2+).

The protein localises to the plastid. It localises to the chloroplast. The enzyme catalyses 2 (2R)-3-phosphoglycerate + 2 H(+) = D-ribulose 1,5-bisphosphate + CO2 + H2O. It catalyses the reaction D-ribulose 1,5-bisphosphate + O2 = 2-phosphoglycolate + (2R)-3-phosphoglycerate + 2 H(+). In terms of biological role, ruBisCO catalyzes two reactions: the carboxylation of D-ribulose 1,5-bisphosphate, the primary event in carbon dioxide fixation, as well as the oxidative fragmentation of the pentose substrate in the photorespiration process. Both reactions occur simultaneously and in competition at the same active site. In Thalassiosira pseudonana (Marine diatom), this protein is Ribulose bisphosphate carboxylase large chain.